The following is an 85-amino-acid chain: Large ribosomal subunit protein bL27 (85 aa).

The interval 1–21 (MAHKKGVGSSKNGRESESKRL) is disordered.

This sequence belongs to the bacterial ribosomal protein bL27 family.

The polypeptide is Large ribosomal subunit protein bL27 (Porphyromonas gingivalis (strain ATCC 33277 / DSM 20709 / CIP 103683 / JCM 12257 / NCTC 11834 / 2561)).